The chain runs to 155 residues: uncharacterized protein (155 aa).

Positions 56-79 (GEKRPTHRRPYRRTKPYPKRPSML) are disordered. A compositionally biased stretch (basic residues) spans 60-73 (PTHRRPYRRTKPYP).

This is an uncharacterized protein from Sinorhizobium fredii (strain NBRC 101917 / NGR234).